A 316-amino-acid chain; its full sequence is tRNA uridine(34) hydroxylase (316 aa).

The Rhodanese domain occupies 123 to 217 (LDEDTVVIDA…YGKNPETRGE (95 aa)). The active-site Cysteine persulfide intermediate is cysteine 177.

This sequence belongs to the TrhO family.

It catalyses the reaction uridine(34) in tRNA + AH2 + O2 = 5-hydroxyuridine(34) in tRNA + A + H2O. Its function is as follows. Catalyzes oxygen-dependent 5-hydroxyuridine (ho5U) modification at position 34 in tRNAs. This chain is tRNA uridine(34) hydroxylase, found in Enterococcus faecalis (strain ATCC 700802 / V583).